Consider the following 214-residue polypeptide: MDVITMSIFLFERDNEKSVIDNLRLLIQMSLKSIELLKDYMNSKDEKILKEIIKIEEEGDETTKNIRINLEKAFLPNMRRELSRSAELLDETLDSLKHAAMLYELLKEEFDEYLKNEIDLVLMITVDMFQHLDRVLDVIEKGGDLDPIIKEIKDKEKFIDDVYQNRIYKYLINLEVESFWEGKILCDFIDNIVNISDYIEDVADELHIIYLHTK.

It belongs to the UPF0111 family.

This is UPF0111 protein MJ0629 from Methanocaldococcus jannaschii (strain ATCC 43067 / DSM 2661 / JAL-1 / JCM 10045 / NBRC 100440) (Methanococcus jannaschii).